Here is a 257-residue protein sequence, read N- to C-terminus: MKIAITGKGGVGKTFIASTLMRLFEKNGFKVIGVDCDPNPTLALAFGVEEEIVPLSKRHDIIEERTGAKPGTYGNIFKINPKVDDLIDKVGYKIGNITLLVMGTIEEGGEGCVCPASVLLRRLLRHLILKRDEVVILDMEAGIEHFGRKTIDTVDLMLIVIEPTKKSLITAKRMKKLANDLGIKNLGVIVNKVRNEDKELLKDIIKEELGLEVLGFVPYDEEVIKSEFLGKPINLDSKAAKEIEKIFNYIIKLKNTT.

7-14 contributes to the ATP binding site; the sequence is GKGGVGKT.

To M.jannaschii MJ0084 and MJ0685.

This is an uncharacterized protein from Methanocaldococcus jannaschii (strain ATCC 43067 / DSM 2661 / JAL-1 / JCM 10045 / NBRC 100440) (Methanococcus jannaschii).